The chain runs to 355 residues: DNA polymerase IV (355 aa).

A UmuC domain is found at 7-188; the sequence is IIHIDMDCFY…LPLSKIPGVG (182 aa). Asp11 and Asp106 together coordinate Mg(2+). Residue Glu107 is part of the active site.

Belongs to the DNA polymerase type-Y family. In terms of assembly, monomer. Mg(2+) serves as cofactor.

It localises to the cytoplasm. The catalysed reaction is DNA(n) + a 2'-deoxyribonucleoside 5'-triphosphate = DNA(n+1) + diphosphate. Poorly processive, error-prone DNA polymerase involved in untargeted mutagenesis. Copies undamaged DNA at stalled replication forks, which arise in vivo from mismatched or misaligned primer ends. These misaligned primers can be extended by PolIV. Exhibits no 3'-5' exonuclease (proofreading) activity. May be involved in translesional synthesis, in conjunction with the beta clamp from PolIII. In Mannheimia succiniciproducens (strain KCTC 0769BP / MBEL55E), this protein is DNA polymerase IV.